A 100-amino-acid polypeptide reads, in one-letter code: Small ribosomal subunit protein uS14c (100 aa).

Residues 1 to 10 (MARKGLIERE) show a composition bias toward basic and acidic residues. The tract at residues 1-29 (MARKGLIEREKKRKKLEQKYHSIRGSSKK) is disordered.

The protein belongs to the universal ribosomal protein uS14 family. As to quaternary structure, part of the 30S ribosomal subunit.

It localises to the plastid. It is found in the chloroplast. Its function is as follows. Binds 16S rRNA, required for the assembly of 30S particles. In Acorus calamus (Sweet flag), this protein is Small ribosomal subunit protein uS14c.